Consider the following 300-residue polypeptide: Porphobilinogen deaminase (300 aa).

Cysteine 239 bears the S-(dipyrrolylmethanemethyl)cysteine mark.

It belongs to the HMBS family. In terms of assembly, monomer. Dipyrromethane is required as a cofactor.

It catalyses the reaction 4 porphobilinogen + H2O = hydroxymethylbilane + 4 NH4(+). It participates in porphyrin-containing compound metabolism; protoporphyrin-IX biosynthesis; coproporphyrinogen-III from 5-aminolevulinate: step 2/4. Functionally, tetrapolymerization of the monopyrrole PBG into the hydroxymethylbilane pre-uroporphyrinogen in several discrete steps. The protein is Porphobilinogen deaminase of Francisella tularensis subsp. novicida (strain U112).